Here is a 478-residue protein sequence, read N- to C-terminus: Proline--tRNA ligase (478 aa).

It belongs to the class-II aminoacyl-tRNA synthetase family. ProS type 3 subfamily. In terms of assembly, homodimer.

It is found in the cytoplasm. The enzyme catalyses tRNA(Pro) + L-proline + ATP = L-prolyl-tRNA(Pro) + AMP + diphosphate. Its function is as follows. Catalyzes the attachment of proline to tRNA(Pro) in a two-step reaction: proline is first activated by ATP to form Pro-AMP and then transferred to the acceptor end of tRNA(Pro). The polypeptide is Proline--tRNA ligase (Ruminiclostridium cellulolyticum (strain ATCC 35319 / DSM 5812 / JCM 6584 / H10) (Clostridium cellulolyticum)).